We begin with the raw amino-acid sequence, 179 residues long: Ribosome maturation factor RimM (179 aa).

In terms of domain architecture, PRC barrel spans 99–174 (EEDEYYFDQI…IMIVDLPEGL (76 aa)).

This sequence belongs to the RimM family. In terms of assembly, binds ribosomal protein uS19.

Its subcellular location is the cytoplasm. An accessory protein needed during the final step in the assembly of 30S ribosomal subunit, possibly for assembly of the head region. Essential for efficient processing of 16S rRNA. May be needed both before and after RbfA during the maturation of 16S rRNA. It has affinity for free ribosomal 30S subunits but not for 70S ribosomes. The chain is Ribosome maturation factor RimM from Natranaerobius thermophilus (strain ATCC BAA-1301 / DSM 18059 / JW/NM-WN-LF).